The chain runs to 116 residues: Endocuticle structural glycoprotein ABD-4 (116 aa).

Residue Gln1 is modified to Pyrrolidone carboxylic acid. Residues 20–92 (DGSYQWNYET…PQGAHFPTPP (73 aa)) enclose the Chitin-binding type R&amp;R domain. The disordered stretch occupies residues 78–97 (ENGFVPQGAHFPTPPPIPPA). An O-linked (GalNAc) threonine; in ADB-4A, ABD-4B and ABD-4C glycan is attached at Thr90. O-linked (GalNAc) threonine; in ADB-4A and ABD-4B glycosylation is present at Thr107. The O-linked (GalNAc) threonine; in ADB-4A glycan is linked to Thr111. A Proline amide modification is found at Pro116.

3 variants exists that arise from a sequential glycosylation with N-acetylgalactosamine at three (ABD-4A), two (ABD-4B) or one (ABD-4C) threonine residues.

Functionally, component of the soft endocuticle of migratory locust. The polypeptide is Endocuticle structural glycoprotein ABD-4 (Locusta migratoria (Migratory locust)).